Consider the following 124-residue polypeptide: Multifunctional methyltransferase subunit TRM112 homolog A (124 aa).

The region spanning 2 to 120 (RLITHNMLSC…NKGIPNMLLH (119 aa)) is the TRM112 domain.

It belongs to the TRM112 family. Interacts with TRM9.

Its function is as follows. Acts as an activator of both rRNA/tRNA and protein methyltransferases. Required for TRM9 tRNA methyltransferase activity. Involved in the regulation of cell division progression during organ growth. Required for the expression of cell cycle-related genes, and the G2-M phase progression during organogenesis. The protein is Multifunctional methyltransferase subunit TRM112 homolog A of Arabidopsis thaliana (Mouse-ear cress).